The sequence spans 149 residues: Nucleoside diphosphate kinase (149 aa).

Residues Lys9, Phe57, Arg85, Thr91, Arg102, and Asn112 each coordinate ATP. His115 serves as the catalytic Pros-phosphohistidine intermediate.

Belongs to the NDK family. Homotetramer. Mg(2+) is required as a cofactor.

Its subcellular location is the cytoplasm. The catalysed reaction is a 2'-deoxyribonucleoside 5'-diphosphate + ATP = a 2'-deoxyribonucleoside 5'-triphosphate + ADP. It catalyses the reaction a ribonucleoside 5'-diphosphate + ATP = a ribonucleoside 5'-triphosphate + ADP. In terms of biological role, major role in the synthesis of nucleoside triphosphates other than ATP. The ATP gamma phosphate is transferred to the NDP beta phosphate via a ping-pong mechanism, using a phosphorylated active-site intermediate. The polypeptide is Nucleoside diphosphate kinase (Crocosphaera subtropica (strain ATCC 51142 / BH68) (Cyanothece sp. (strain ATCC 51142))).